The sequence spans 294 residues: Tryptophan 2,3-dioxygenase (294 aa).

Substrate contacts are provided by residues 63–67 (FIIQH), Tyr125, and Arg129. Heme is bound at residue His252. Thr266 lines the substrate pocket.

It belongs to the tryptophan 2,3-dioxygenase family. Homotetramer. Heme serves as cofactor.

It catalyses the reaction L-tryptophan + O2 = N-formyl-L-kynurenine. Its pathway is amino-acid degradation; L-tryptophan degradation via kynurenine pathway; L-kynurenine from L-tryptophan: step 1/2. Its function is as follows. Heme-dependent dioxygenase that catalyzes the oxidative cleavage of the L-tryptophan (L-Trp) pyrrole ring and converts L-tryptophan to N-formyl-L-kynurenine. Catalyzes the oxidative cleavage of the indole moiety. The sequence is that of Tryptophan 2,3-dioxygenase from Polaromonas sp. (strain JS666 / ATCC BAA-500).